The sequence spans 485 residues: ATP synthase subunit beta (485 aa).

158–165 (GGAGVGKT) provides a ligand contact to ATP.

The protein belongs to the ATPase alpha/beta chains family. As to quaternary structure, F-type ATPases have 2 components, CF(1) - the catalytic core - and CF(0) - the membrane proton channel. CF(1) has five subunits: alpha(3), beta(3), gamma(1), delta(1), epsilon(1). CF(0) has four main subunits: a(1), b(1), b'(1) and c(9-12).

The protein resides in the cell inner membrane. The catalysed reaction is ATP + H2O + 4 H(+)(in) = ADP + phosphate + 5 H(+)(out). In terms of biological role, produces ATP from ADP in the presence of a proton gradient across the membrane. The catalytic sites are hosted primarily by the beta subunits. The sequence is that of ATP synthase subunit beta from Erythrobacter litoralis (strain HTCC2594).